The primary structure comprises 171 residues: NADH-quinone oxidoreductase subunit I (171 aa).

2 consecutive 4Fe-4S ferredoxin-type domains span residues 63 to 92 (RRYENGEERCIACKLCEAVCPALAITIESD) and 102 to 131 (TRYDIDLTKCIFCGFCEESCPVDSIVETQI). Cys72, Cys75, Cys78, Cys82, Cys111, Cys114, Cys117, and Cys121 together coordinate [4Fe-4S] cluster.

It belongs to the complex I 23 kDa subunit family. In terms of assembly, NDH-1 is composed of 14 different subunits. Subunits NuoA, H, J, K, L, M, N constitute the membrane sector of the complex. [4Fe-4S] cluster serves as cofactor.

The protein resides in the cell inner membrane. It catalyses the reaction a quinone + NADH + 5 H(+)(in) = a quinol + NAD(+) + 4 H(+)(out). Its function is as follows. NDH-1 shuttles electrons from NADH, via FMN and iron-sulfur (Fe-S) centers, to quinones in the respiratory chain. The immediate electron acceptor for the enzyme in this species is believed to be ubiquinone. Couples the redox reaction to proton translocation (for every two electrons transferred, four hydrogen ions are translocated across the cytoplasmic membrane), and thus conserves the redox energy in a proton gradient. The protein is NADH-quinone oxidoreductase subunit I of Paracidovorax citrulli (strain AAC00-1) (Acidovorax citrulli).